A 309-amino-acid polypeptide reads, in one-letter code: Syndecan-1 (309 aa).

A signal peptide spans 1–22; the sequence is MRRAALWLWLCALALRLQPVLP. Topologically, residues 24–253 are extracellular; that stretch reads IMAVNVPPED…GLLDRKEVLG (230 aa). Disordered stretches follow at residues 28 to 57 and 142 to 185; these read NVPPEDQDGSGDDSDNFSGSGTGALPDITL and ARAT…GGTS. A compositionally biased stretch (acidic residues) spans 32–42; the sequence is EDQDGSGDDSD. An O-linked (Xyl...) (chondroitin sulfate) serine glycan is attached at serine 37. An N-linked (GlcNAc...) asparagine glycan is attached at asparagine 43. Residues serine 45 and serine 47 are each glycosylated (O-linked (Xyl...) (heparan sulfate) serine). A compositionally biased stretch (polar residues) spans 142 to 151; sequence ARATTAQAPV. O-linked (Xyl...) (chondroitin sulfate) serine glycans are attached at residues serine 205 and serine 215. The chain crosses the membrane as a helical span at residues 254 to 274; sequence GVIAGGLVGLIFAVCLVGFML. The Cytoplasmic portion of the chain corresponds to 275–309; that stretch reads YRMKKKDEGSYSLEEPKQANGGAYQKPTKQEEFYA. The disordered stretch occupies residues 283–309; that stretch reads GSYSLEEPKQANGGAYQKPTKQEEFYA. A Phosphoserine modification is found at serine 284.

This sequence belongs to the syndecan proteoglycan family. Interacts with CDCP1. Interacts (via C-terminus) with TIAM1 (via PDZ domain). Interacts with MDK. In terms of processing, shedding is enhanced by a number of factors such as heparanase, thrombin or EGF. Also by stress and wound healing. PMA-mediated shedding is inhibited by TIMP3.

The protein localises to the membrane. Its subcellular location is the secreted. The protein resides in the extracellular exosome. Cell surface proteoglycan that contains both heparan sulfate and chondroitin sulfate and that links the cytoskeleton to the interstitial matrix. Regulates exosome biogenesis in concert with SDCBP and PDCD6IP. Able to induce its own expression in dental mesenchymal cells and also in the neighboring dental epithelial cells via an MSX1-mediated pathway. The chain is Syndecan-1 from Cricetulus griseus (Chinese hamster).